The chain runs to 154 residues: MFGADKGTADRLDGRKLHIGIVQARFNEGITEALAAACREELLALGVQEKNIRHVRVPGALEVPLALQALAEQDEYDALIALGCIIRGETYHFELVANESGAGVTRVSLDTQTPIANAILTTENLEQAVARQTEKGRDAARVAVEMANLLEELS.

Residues Phe26, 60-62 (ALE), and 84-86 (CII) each bind 5-amino-6-(D-ribitylamino)uracil. 89–90 (ET) lines the (2S)-2-hydroxy-3-oxobutyl phosphate pocket. His92 functions as the Proton donor in the catalytic mechanism. Residue Asn117 participates in 5-amino-6-(D-ribitylamino)uracil binding. Arg131 serves as a coordination point for (2S)-2-hydroxy-3-oxobutyl phosphate.

Belongs to the DMRL synthase family.

The catalysed reaction is (2S)-2-hydroxy-3-oxobutyl phosphate + 5-amino-6-(D-ribitylamino)uracil = 6,7-dimethyl-8-(1-D-ribityl)lumazine + phosphate + 2 H2O + H(+). Its pathway is cofactor biosynthesis; riboflavin biosynthesis; riboflavin from 2-hydroxy-3-oxobutyl phosphate and 5-amino-6-(D-ribitylamino)uracil: step 1/2. Functionally, catalyzes the formation of 6,7-dimethyl-8-ribityllumazine by condensation of 5-amino-6-(D-ribitylamino)uracil with 3,4-dihydroxy-2-butanone 4-phosphate. This is the penultimate step in the biosynthesis of riboflavin. This is 6,7-dimethyl-8-ribityllumazine synthase from Paracidovorax citrulli (strain AAC00-1) (Acidovorax citrulli).